Consider the following 335-residue polypeptide: Glyoxylate reductase (335 aa).

Residues 159–162 (MGRI), 181–183 (SRS), and 240–242 (TGR) contribute to the NADP(+) site. Residues Arg-242 and Glu-271 contribute to the active site. His-290 (proton donor) is an active-site residue. 290–292 (HAA) serves as a coordination point for NADP(+).

The protein belongs to the D-isomer specific 2-hydroxyacid dehydrogenase family. GyaR subfamily. In terms of assembly, homodimer.

The protein resides in the cytoplasm. The enzyme catalyses glycolate + NAD(+) = glyoxylate + NADH + H(+). This chain is Glyoxylate reductase, found in Aeropyrum pernix (strain ATCC 700893 / DSM 11879 / JCM 9820 / NBRC 100138 / K1).